A 218-amino-acid chain; its full sequence is Adenylate kinase (218 aa).

10 to 15 (GAGKGT) serves as a coordination point for ATP. The segment at 30–59 (STGDMIRETIKSGSVLGQELKKVLDAGELV) is NMP. AMP is bound by residues threonine 31, arginine 36, 57–59 (ELV), and glutamine 92. Residues 122-159 (GRRIHPASGRTYHTKFNPPKVADKDDVTGEPLITRTDD) are LID. ATP-binding positions include arginine 123 and 132-133 (TY). Positions 156 and 167 each coordinate AMP. Glutamine 202 lines the ATP pocket.

It belongs to the adenylate kinase family. As to quaternary structure, monomer.

Its subcellular location is the cytoplasm. The enzyme catalyses AMP + ATP = 2 ADP. The protein operates within purine metabolism; AMP biosynthesis via salvage pathway; AMP from ADP: step 1/1. Catalyzes the reversible transfer of the terminal phosphate group between ATP and AMP. Plays an important role in cellular energy homeostasis and in adenine nucleotide metabolism. The sequence is that of Adenylate kinase from Francisella tularensis subsp. holarctica (strain LVS).